The following is a 235-amino-acid chain: Large ribosomal subunit protein uL1 (235 aa).

Belongs to the universal ribosomal protein uL1 family. In terms of assembly, part of the 50S ribosomal subunit.

Binds directly to 23S rRNA. The L1 stalk is quite mobile in the ribosome, and is involved in E site tRNA release. In terms of biological role, protein L1 is also a translational repressor protein, it controls the translation of the L11 operon by binding to its mRNA. The polypeptide is Large ribosomal subunit protein uL1 (Mycobacterium sp. (strain JLS)).